We begin with the raw amino-acid sequence, 610 residues long: Phosphoprotein 85 (610 aa).

Disordered regions lie at residues 462 to 530 (NEGR…NISD) and 543 to 610 (EEPM…DARL). The segment covering 467–478 (SSRASPSHSTST) has biased composition (low complexity). Over residues 484 to 495 (PQSDRSTPTSIL) the composition is skewed to polar residues. 2 stretches are compositionally biased toward low complexity: residues 503–515 (SNSR…FSQE) and 552–567 (SPQS…RQSR). A compositionally biased stretch (polar residues) spans 581 to 592 (VPSSQTRRQNNA). Residues 600–610 (RLTEMMNDARL) are compositionally biased toward basic and acidic residues.

It belongs to the herpesviridae pp85 family. Post-translationally, phosphorylated.

The protein resides in the virion tegument. It is found in the host cytoplasm. In Homo sapiens (Human), this protein is Phosphoprotein 85 (U14).